The following is a 408-amino-acid chain: Phosphoglycerate kinase (408 aa).

Residues 24-26, Arg-40, 63-66, Arg-120, and Arg-160 contribute to the substrate site; these read DIN and HQGR. ATP is bound by residues Glu-331 and 357–360; that span reads GGHM.

Belongs to the phosphoglycerate kinase family.

The protein localises to the cytoplasm. It carries out the reaction (2R)-3-phosphoglycerate + ATP = (2R)-3-phospho-glyceroyl phosphate + ADP. It participates in carbohydrate degradation; glycolysis; pyruvate from D-glyceraldehyde 3-phosphate: step 2/5. The chain is Phosphoglycerate kinase (pgk) from Saccharolobus solfataricus (strain ATCC 35092 / DSM 1617 / JCM 11322 / P2) (Sulfolobus solfataricus).